A 441-amino-acid chain; its full sequence is Histidine--tRNA ligase (441 aa).

This sequence belongs to the class-II aminoacyl-tRNA synthetase family. Homodimer.

The protein localises to the cytoplasm. It catalyses the reaction tRNA(His) + L-histidine + ATP = L-histidyl-tRNA(His) + AMP + diphosphate + H(+). The sequence is that of Histidine--tRNA ligase from Synechococcus sp. (strain WH7803).